The chain runs to 128 residues: Small ribosomal subunit protein uS11 (128 aa).

Belongs to the universal ribosomal protein uS11 family. As to quaternary structure, part of the 30S ribosomal subunit. Interacts with proteins S7 and S18. Binds to IF-3.

In terms of biological role, located on the platform of the 30S subunit, it bridges several disparate RNA helices of the 16S rRNA. Forms part of the Shine-Dalgarno cleft in the 70S ribosome. The chain is Small ribosomal subunit protein uS11 from Desulfatibacillum aliphaticivorans.